Here is a 90-residue protein sequence, read N- to C-terminus: Probable Fe(2+)-trafficking protein (90 aa).

The protein belongs to the Fe(2+)-trafficking protein family.

Could be a mediator in iron transactions between iron acquisition and iron-requiring processes, such as synthesis and/or repair of Fe-S clusters in biosynthetic enzymes. In Bordetella avium (strain 197N), this protein is Probable Fe(2+)-trafficking protein.